The primary structure comprises 571 residues: MSNKKTFKKYSRVAGLLTAALIIGNLVTANAESNKQNTASTETTTTNEQPKPESSELTTEKAGQKTDDMLNSNDMIKLAPKEMPLESAEKEEKKSEDKKKSEEDHTEEINDKIYSLNYNELEVLAKNGETIENFVPKEGVKKADKFIVIERKKKNINTTPVDISIIDSVTDRTYPAALQLANKGFTENKPDAVVTKRNPQKIHIDLPGMGDKATVEVNDPTYANVSTAIDNLVNQWHDNYSGGNTLPARTQYTESMVYSKSQIEAALNVNSKILDGTLGIDFKSISKGEKKVMIAAYKQIFYTVSANLPNNPADVFDKSVTFKELQRKGVSNEAPPLFVSNVAYGRTVFVKLETSSKSNDVEAAFSAALKGTDVKTNGKYSDILENSSFTAVVLGGDAAEHNKVVTKDFDVIRNVIKDNATFSRKNPAYPISYTSVFLKNNKIAGVNNRTEYVETTSTEYTSGKINLSHQGAYVAQYEILWDEINYDDKGKEVITKRRWDNNWYSKTSPFSTVIPLGANSRNIRIMARECTGLAWEWWRKVIDERDVKLSKEINVNISGSTLSPYGSITYK.

The signal sequence occupies residues 1–33 (MSNKKTFKKYSRVAGLLTAALIIGNLVTANAES). The disordered stretch occupies residues 30–108 (NAESNKQNTA…KKSEEDHTEE (79 aa)). Over residues 37-48 (NTASTETTTTNE) the composition is skewed to low complexity. Composition is skewed to basic and acidic residues over residues 50–68 (PKPESSELTTEKAGQKTDD) and 79–108 (APKEMPLESAEKEEKKSEDKKKSEEDHTEE). The next 4 membrane-spanning stretches (beta stranded) occupy residues 260 to 273 (KSQIEAALNVNSKI), 280 to 289 (IDFKSISKGE), 358 to 367 (SNDVEAAFSA), and 375 to 387 (KTNGKYSDILENS). The Conserved undecapeptide motif lies at 529 to 539 (ECTGLAWEWWR). The Cholesterol binding signature appears at 561-562 (TL).

It belongs to the cholesterol-dependent cytolysin family. In terms of assembly, homooligomeric pore complex of 35 to 50 subunits; when inserted in the host membrane.

It localises to the secreted. The protein resides in the host cell membrane. Its function is as follows. A cholesterol-dependent toxin that causes cytolysis by forming pores in cholesterol containing host membranes. After binding to target membranes, the protein undergoes a major conformation change, leading to its insertion in the host membrane and formation of an oligomeric pore complex. Cholesterol is required for binding to host membranes, membrane insertion and pore formation; cholesterol binding is mediated by a Thr-Leu pair in the C-terminus. Can be reversibly inactivated by oxidation. This Streptococcus pyogenes serotype M3 (strain ATCC BAA-595 / MGAS315) protein is Streptolysin O (slo).